Here is a 491-residue protein sequence, read N- to C-terminus: Immediate early protein IE1 (491 aa).

Residues 1–11 (MESSAKRKMDP) are compositionally biased toward basic and acidic residues. Residues 1–24 (MESSAKRKMDPDNPDEGPSSKVPR) form a nuclear localization signal region. The segment at 1–30 (MESSAKRKMDPDNPDEGPSSKVPRPETPVT) is disordered. Residues 132–346 (ILDKVHEPFE…SVMKRRIEEI (215 aa)) form an interaction with host PML, interference with PML sumoylation and disruption of PML-associated nuclear bodies region. An interaction with host STAT2 region spans residues 373 to 445 (AIAEESDEEE…EEGAQEERED (73 aa)). Residues 410–420 (ATIPLSSVIVA) are modulation of STAT3/STAT1 signaling. Residues 410–445 (ATIPLSSVIVAENSDQEESEQSDEEEEEGAQEERED) are interaction with host STAT3. The tract at residues 421-472 (ENSDQEESEQSDEEEEEGAQEEREDTVSVKSEPVSEIEEVAPEEEEDGAEEP) is acidic. Residues 421 to 491 (ENSDQEESEQ…PMVTRSKADQ (71 aa)) form a disordered region. A compositionally biased stretch (acidic residues) spans 423–444 (SDQEESEQSDEEEEEGAQEERE). Positions 449–452 (VKSE) are interaction with host SUMO1. Lys-450 participates in a covalent cross-link: Glycyl lysine isopeptide (Lys-Gly) (interchain with G-Cter in SUMO). Residues 455–470 (SEIEEVAPEEEEDGAE) show a composition bias toward acidic residues. The interval 475–491 (SGGKSTHPMVTRSKADQ) is chromosome-tethering domain (CTD), binding to histones.

It belongs to the HHV-5 IE1 protein family. Forms homodimers. Interacts with human p53/TP53; this interaction inhibits p53/TP53-dependent transactivation activity. Interacts with host STAT1. Interacts with host STAT2; this interaction promotes viral growth and counteracts the antiviral interferon response. May also interact with the host STAT1-STAT2 heterodimer. Interacts with host STAT3; this interaction leads to STAT3 nuclear accumulation and disruption of IL6-induced STAT3 phosphorylation. Interacts with host PML; this interaction inhibits host PML de novo sumoylation and probably inhibits PML regulation of type I and type II interferon-induced gene expression. Interacts with host DAXX. Interacts with host SP100. Interacts with host E2F1. Interacts with host RB1. Interacts with host HDAC1; this interaction inhibits histone deacetylation and promotes viral transcription. Interacts with host HDAC2; this interaction inhibits histone deacetylation and promotes viral transcription. Interacts with host HDAC3; this interaction inhibits histone deacetylation and promotes viral transcription. Interacts with host PLSCR1; this interaction inhibits IE1 transactivating activity. Post-translationally, sumoylated by host PML/nuclear domain 10. Sumoylation abolishes the interaction with host STAT2 and thus the IE1-mediated repression of interferon-stimulated genes.

It localises to the host nucleus. Its function is as follows. Plays an important role in transactivating viral early genes as well as activating its own promoter, probably by altering the viral chromatin structure. Expression of IE1 and IE2 proteins is critical for the establishment of lytic infection and reactivation from viral latency. Disrupts PML-associated ND10 nuclear bodies by interfering with host PML and SP100 sumoylation thereby altering the regulation of type I and type II interferon-induced gene expression. Promotes efficient viral growth by interacting with and directing host SP100 to degradation, leading to enhanced acetylation level of histones. In addition, functions in counteracting the host innate antiviral response. Inhibits the type I interferon pathway by directly interacting with and sequestrating host STAT2. Also targets type II interferon pathway by repressing IL6- and STAT3 target genes. Repression of STAT3 genes is due to STAT3 nuclear accumulation and disruption of IL6-induced STAT3 phosphorylation by IE1. This repression is followed by phosphorylation and activation of STAT1. Inhibits host ISG transcription by sequestering host ISGF3 in a PML- and STAT2- binding dependent manner. Alters host cell cycle progression, probably through its interaction with host E2F1 or RB1 that overcomes the RB1-mediated repression of E2F-responsive promoters. May act as a E3 ubiquitin ligase targeting several host proteins including HES1 and SP100A for ubiquitination and subsequent proteasomal degradation. Impairs the radial migration of immature neurons by downregulating Gap junction alpha-1 protein/GJA1 also via ubiquitination and degradation. In Human cytomegalovirus (strain Towne) (HHV-5), this protein is Immediate early protein IE1 (UL123).